We begin with the raw amino-acid sequence, 216 residues long: LexA repressor (216 aa).

A DNA-binding region (H-T-H motif) is located at residues 29-49 (RAEIAQALGFRSPNAAEDHLK). Residues S134 and K171 each act as for autocatalytic cleavage activity in the active site.

It belongs to the peptidase S24 family. Homodimer.

It carries out the reaction Hydrolysis of Ala-|-Gly bond in repressor LexA.. Represses a number of genes involved in the response to DNA damage (SOS response), including recA and lexA. In the presence of single-stranded DNA, RecA interacts with LexA causing an autocatalytic cleavage which disrupts the DNA-binding part of LexA, leading to derepression of the SOS regulon and eventually DNA repair. The polypeptide is LexA repressor (Bordetella parapertussis (strain 12822 / ATCC BAA-587 / NCTC 13253)).